A 1938-amino-acid chain; its full sequence is Myosin-1 (1938 aa).

Residues 33-82 (DAKTSVFVADPKESFVKATVQSREGGKVTAKTEAGATVTVKEDQCFPMNP) enclose the Myosin N-terminal SH3-like domain. Thr64 and Thr69 each carry phosphothreonine. Positions 86 to 781 (DKIEDMAMMT…LLGLLEEMRD (696 aa)) constitute a Myosin motor domain. Lys130 carries the post-translational modification N6,N6,N6-trimethyllysine. 179–186 (GESGAGKT) contacts ATP. Tyr389 is subject to Phosphotyrosine. Residue Thr419 is modified to Phosphothreonine. Tyr424 carries the phosphotyrosine modification. Ser625 is subject to Phosphoserine. Positions 658–680 (LNKLMTNLRSTHPHFVRCIIPNE) are actin-binding. The residue at position 756 (His756) is a Pros-methylhistidine. Residues 760-774 (KFGHTKVFFKAGLLG) form an actin-binding region. Positions 784–813 (LAQIITRTQARCRGFLARVEYQRMVERRES) constitute an IQ domain. The stretch at 842–1938 (LLKSAETEKE…EVHTKIISEE (1097 aa)) forms a coiled coil. Phosphoserine is present on residues Ser1091 and Ser1095. 2 disordered regions span residues 1124-1146 (EIEA…SREL) and 1152-1171 (RLEE…KKRE). Residues 1127–1146 (AERASRAKAEKQRSDLSREL) are compositionally biased toward basic and acidic residues. 2 positions are modified to phosphoserine: Ser1161 and Ser1236. Thr1240 carries the post-translational modification Phosphothreonine. Ser1242 is subject to Phosphoserine. At Thr1254 the chain carries Phosphothreonine. At Ser1260 the chain carries Phosphoserine. At Thr1285 the chain carries Phosphothreonine. Phosphoserine occurs at positions 1291, 1302, and 1305. Position 1463 is a phosphotyrosine (Tyr1463). The residue at position 1466 (Thr1466) is a Phosphothreonine. Phosphoserine is present on Ser1473. A Phosphotyrosine modification is found at Tyr1491. Ser1494 carries the post-translational modification Phosphoserine. A Phosphothreonine modification is found at Thr1500. Ser1513 is subject to Phosphoserine. Residue Thr1516 is modified to Phosphothreonine. Ser1541, Ser1553, Ser1573, Ser1713, and Ser1725 each carry phosphoserine. A phosphothreonine mark is found at Thr1729 and Thr1735. Ser1738 is modified (phosphoserine).

Belongs to the TRAFAC class myosin-kinesin ATPase superfamily. Myosin family. In terms of assembly, muscle myosin is a hexameric protein that consists of 2 heavy chain subunits (MHC), 2 alkali light chain subunits (MLC) and 2 regulatory light chain subunits (MLC-2). Interacts with SLC26A5.

It is found in the cytoplasm. The protein resides in the myofibril. In terms of biological role, required for normal hearing. It plays a role in cochlear amplification of auditory stimuli, likely through the positive regulation of prestin (SLC26A5) activity and outer hair cell (OHC) electromotility. The polypeptide is Myosin-1 (MYH1) (Equus caballus (Horse)).